The primary structure comprises 138 residues: Transcription antitermination protein NusB (138 aa).

Belongs to the NusB family.

Involved in transcription antitermination. Required for transcription of ribosomal RNA (rRNA) genes. Binds specifically to the boxA antiterminator sequence of the ribosomal RNA (rrn) operons. This is Transcription antitermination protein NusB from Photorhabdus laumondii subsp. laumondii (strain DSM 15139 / CIP 105565 / TT01) (Photorhabdus luminescens subsp. laumondii).